The primary structure comprises 474 residues: P2X purinoceptor 2 (474 aa).

The Cytoplasmic portion of the chain corresponds to 1–42; the sequence is MAATHPKAPTAQRLRQGWSAFWDYETPKVIVVRNRPLGVVYR. A helical transmembrane segment spans residues 43–60; it reads AVQLLILLYFVWYVFIVQ. Residues 61-333 are Extracellular-facing; that stretch reads KSYQDSETGP…IVHGQAGKFS (273 aa). ATP-binding residues include K77 and K79. 3 cysteine pairs are disulfide-bonded: C121/C172, C132/C155, and C138/C166. N-linked (GlcNAc...) asparagine glycosylation occurs at N129. N190 is a glycosylation site (N-linked (GlcNAc...) asparagine). T192 contacts ATP. A disulfide bridge links C222 with C232. N247 carries N-linked (GlcNAc...) asparagine glycosylation. The cysteines at positions 266 and 275 are disulfide-linked. Residues S292, N296, and R298 each coordinate ATP. The N-linked (GlcNAc...) asparagine glycan is linked to N306. Residue K315 participates in ATP binding. Residues 316 to 329 form a pore-forming motif region; sequence AYGIRIDVIVHGQA. The chain crosses the membrane as a helical span at residues 334–354; it reads LIPTIINLATALTSIGVGSFL. Topologically, residues 355-474 are cytoplasmic; that stretch reads CDWILLTFMN…PTDPKGLAQL (120 aa). A disordered region spans residues 445-474; it reads PDRCVGQGLPSSESPLQDSTPTDPKGLAQL. The segment covering 453 to 466 has biased composition (polar residues); sequence LPSSESPLQDSTPT.

Belongs to the P2X receptor family. Homotrimer and heterotrimer; functional P2XRs are organized as homomeric and heteromeric trimers. Homotrimer. Forms heterodimer with P2RX1. Forms heterotrimer with P2RX6. Forms heterotrimer with P2RX3. In terms of tissue distribution, express in organ of Corti.

It is found in the cell membrane. It catalyses the reaction Ca(2+)(in) = Ca(2+)(out). The catalysed reaction is K(+)(in) = K(+)(out). It carries out the reaction Na(+)(in) = Na(+)(out). Fast activation by external ATP. Exhibits slow desensitization during prolonged ATP activation. Not sensitive to the ATP agonist:alpha/beta-methylene-ATP. Its function is as follows. ATP-gated nonselective transmembrane cation channel permeable to potassium, sodium and calcium. Activation by extracellular ATP induces a variety of cellular responses, such as excitatory postsynaptic responses in sensory neurons, neuromuscular junctions (NMJ) formation, hearing, perception of taste and peristalsis. In the inner ear, regulates sound transduction and auditory neurotransmission, outer hair cell electromotility, inner ear gap junctions, and K(+) recycling. Mediates synaptic transmission between neurons and from neurons to smooth muscle. The protein is P2X purinoceptor 2 (P2RX2) of Cavia porcellus (Guinea pig).